The primary structure comprises 100 residues: Small ribosomal subunit protein uS14c (100 aa).

The protein belongs to the universal ribosomal protein uS14 family. As to quaternary structure, part of the 30S ribosomal subunit.

The protein localises to the plastid. It localises to the chloroplast. Its function is as follows. Binds 16S rRNA, required for the assembly of 30S particles. This chain is Small ribosomal subunit protein uS14c, found in Rhodomonas salina (Cryptomonas salina).